The chain runs to 211 residues: Agamous-like MADS-box protein AGL12 (211 aa).

The MADS-box domain occupies 3-57 (RGKIQLKRIENPVHRQVTFCKRRTGLLKKAKELSVLCDAEIGVVIFSPQGKLFEL). The K-box domain occupies 95–185 (NLDPKDEINV…LEKIEENNNS (91 aa)).

Preferentially expressed in roots. In root meristem, expressed in external cells of columella, lateral root cap and atrichoblasts. In mature root, expressed in the central cylinder. Expressed in leaf vasculature, young floral meristems and nectaries.

It is found in the nucleus. In terms of biological role, probable transcription activator that regulates root development by controlling cell proliferation in root meristem. May mediate responses to auxin in the root. May act as promoter of the flowering transition through up-regulation of SOC, FT and LFY. The polypeptide is Agamous-like MADS-box protein AGL12 (Arabidopsis thaliana (Mouse-ear cress)).